Consider the following 451-residue polypeptide: Tubulin gamma-1 chain (451 aa).

Ser131 bears the Phosphoserine; by BRSK1 mark. 142–148 (AGGTGSG) is a GTP binding site.

This sequence belongs to the tubulin family. Component of the gamma-tubulin ring complex (gTuRC) consisting of TUBGCP2, TUBGCP3, TUBGCP4, TUBGCP5 and TUBGCP6 and gamma-tubulin TUBG1 or TUBG2. TUBGCP2, TUBGCP3, TUBGCP4, TUBGCP5 and TUBGCP6 assemble in a 5:5:2:1:1 stoichiometry; each is associated with a gamma-tubulin, thereby arranging 14 gamma-tubulins in a helical manner. Gamma-tubulin at the first position is blocked by TUBGCP3 at the last position, allowing 13 protafilaments to grow into a microtubule. The gTuRC (via TUBGCP3 and TUBGCP6) interacts with ACTB and MZT1; the interactions form a luminal bridge that stabilizes the initial structure during complex assembly. The gTuRC (via TUBGCP2) interacts with MZT2A/MZT2B and CDK5RAP2 (via CM1 motif); the interactions play a role in gTuRC activation. Interacts with alpha-beta tubulin heterodimers; the interaction allows microtubules to nucleate from the gTuRC. Interacts with B9D2. Interacts with CDK5RAP2; the interaction is leading to centrosomal localization of TUBG1 and CDK5RAP2. Interacts with CIMAP3. Interacts with SAS6 and NUP62 at the centrosome. Interacts with EML3 (phosphorylated at 'Thr-881') and HAUS8. Interacts with DNM2; this interaction may participate in centrosome cohesion. Interacts with CCDC66. Post-translationally, phosphorylation at Ser-131 by BRSK1 regulates centrosome duplication, possibly by mediating relocation of gamma-tubulin and its associated proteins from the cytoplasm to the centrosome.

The protein resides in the cytoplasm. It is found in the cytoskeleton. The protein localises to the microtubule organizing center. Its subcellular location is the centrosome. It localises to the spindle. Functionally, tubulin is the major constituent of microtubules, protein filaments consisting of alpha- and beta-tubulin heterodimers. Gamma-tubulin is a key component of the gamma-tubulin ring complex (gTuRC) which mediates microtubule nucleation. The gTuRC regulates the minus-end nucleation of alpha-beta tubulin heterodimers that grow into microtubule protafilaments, a critical step in centrosome duplication and spindle formation. The sequence is that of Tubulin gamma-1 chain from Mus musculus (Mouse).